Here is a 155-residue protein sequence, read N- to C-terminus: Putative pre-16S rRNA nuclease (155 aa).

It belongs to the YqgF nuclease family.

It localises to the cytoplasm. Functionally, could be a nuclease involved in processing of the 5'-end of pre-16S rRNA. This Novosphingobium aromaticivorans (strain ATCC 700278 / DSM 12444 / CCUG 56034 / CIP 105152 / NBRC 16084 / F199) protein is Putative pre-16S rRNA nuclease.